Consider the following 901-residue polypeptide: Protein translocase subunit SecA (901 aa).

Residues Gln87, 105–109 (GEGKT), and Asp512 each bind ATP. Residues 868-901 (AALAAQTGERKVGRNDPCPCGSGKKYKQCHGRLQ) form a disordered region. Cys885, Cys887, Cys896, and His897 together coordinate Zn(2+). The segment covering 891 to 901 (KKYKQCHGRLQ) has biased composition (basic residues).

The protein belongs to the SecA family. Monomer and homodimer. Part of the essential Sec protein translocation apparatus which comprises SecA, SecYEG and auxiliary proteins SecDF-YajC and YidC. Zn(2+) serves as cofactor.

Its subcellular location is the cell inner membrane. The protein resides in the cytoplasm. The enzyme catalyses ATP + H2O + cellular proteinSide 1 = ADP + phosphate + cellular proteinSide 2.. Functionally, part of the Sec protein translocase complex. Interacts with the SecYEG preprotein conducting channel. Has a central role in coupling the hydrolysis of ATP to the transfer of proteins into and across the cell membrane, serving both as a receptor for the preprotein-SecB complex and as an ATP-driven molecular motor driving the stepwise translocation of polypeptide chains across the membrane. This is Protein translocase subunit SecA from Escherichia coli O45:K1 (strain S88 / ExPEC).